Consider the following 465-residue polypeptide: ATP synthase subunit beta 2 (465 aa).

148-155 (GGAGVGKT) is a binding site for ATP.

Belongs to the ATPase alpha/beta chains family. As to quaternary structure, F-type ATPases have 2 components, CF(1) - the catalytic core - and CF(0) - the membrane proton channel. CF(1) has five subunits: alpha(3), beta(3), gamma(1), delta(1), epsilon(1). CF(0) has three main subunits: a(1), b(2) and c(9-12). The alpha and beta chains form an alternating ring which encloses part of the gamma chain. CF(1) is attached to CF(0) by a central stalk formed by the gamma and epsilon chains, while a peripheral stalk is formed by the delta and b chains.

It is found in the cell inner membrane. The enzyme catalyses ATP + H2O + 4 H(+)(in) = ADP + phosphate + 5 H(+)(out). Functionally, produces ATP from ADP in the presence of a proton gradient across the membrane. The catalytic sites are hosted primarily by the beta subunits. The polypeptide is ATP synthase subunit beta 2 (Psychromonas ingrahamii (strain DSM 17664 / CCUG 51855 / 37)).